The sequence spans 764 residues: Ergosteryl-beta-glucosidase (764 aa).

Glu-515 serves as the catalytic Nucleophile. Positions 588 to 629 (HDTRAKTPTPEPSPASTVASVSTSTSKSGSSQPPSFIKPDNH) are disordered. Thr-594 is subject to Phosphothreonine. Residues 601–622 (PASTVASVSTSTSKSGSSQPPS) are compositionally biased toward low complexity.

Belongs to the glycosyl hydrolase 5 (cellulase A) family.

It localises to the cytoplasm. It is found in the cytosol. The protein localises to the vacuole membrane. The catalysed reaction is ergosteryl 3-beta-D-glucoside + H2O = ergosterol + D-glucose. Functionally, ergosteryl beta-glucosidase involved in the ergosteryl beta-glucoside (EG) catabolic pathway and vacuole formation via hydrolysis of EG to generate glucose. Is also able to hydrolyze cholesteryl beta-glucoside and sitosteryl beta-glucoside to generate glucose; and C6-7-nitro-2,1,3-benzoxadiazole (NBD)-GlcCer to generate C6-NBD-ceramide (Cer). This Saccharomyces cerevisiae (strain ATCC 204508 / S288c) (Baker's yeast) protein is Ergosteryl-beta-glucosidase.